The following is a 389-amino-acid chain: Alkanesulfonate monooxygenase (389 aa).

Belongs to the SsuD family.

The catalysed reaction is an alkanesulfonate + FMNH2 + O2 = an aldehyde + FMN + sulfite + H2O + 2 H(+). In terms of biological role, catalyzes the desulfonation of aliphatic sulfonates. This is Alkanesulfonate monooxygenase from Variovorax paradoxus (strain S110).